A 633-amino-acid chain; its full sequence is uncharacterized protein (633 aa).

A disordered region spans residues 12–43; the sequence is ESGTNNYSDTIANGNTLPPRSKKGHSGRRKRS. Residues 13 to 29 show a composition bias toward polar residues; that stretch reads SGTNNYSDTIANGNTLP. Residues 31-42 are compositionally biased toward basic residues; it reads RSKKGHSGRRKR. The next 2 helical transmembrane spans lie at 99 to 118 and 217 to 233; these read ILFG…SSAL and NCAF…ITAC. The disordered stretch occupies residues 593 to 612; the sequence is DAETNKATGSAKSENIETKS.

The protein resides in the membrane. This is an uncharacterized protein from Saccharomyces cerevisiae (strain ATCC 204508 / S288c) (Baker's yeast).